The following is a 219-amino-acid chain: Ras-related protein Rab-3B (219 aa).

Alanine 2 carries the N-acetylalanine modification. Residues serine 31, serine 32, valine 33, glycine 34, lysine 35, threonine 36, serine 37, proline 49, and serine 53 each coordinate GTP. Threonine 36 is a binding site for Mg(2+). The Switch 1 signature appears at 45 to 58 (DTFTPAFVSTVGID). Mg(2+) contacts are provided by threonine 54 and aspartate 77. Residues 78-96 (TAGQERYRTITTAYYRGAM) carry the Switch 2 motif. Glycine 80 contributes to the GTP binding site. Threonine 86 bears the Phosphothreonine mark. Residues asparagine 135, lysine 136, aspartate 138, alanine 166, and lysine 167 each coordinate GTP. Phosphoserine is present on residues serine 188 and serine 190. Residues cysteine 217 and cysteine 219 are each lipidated (S-geranylgeranyl cysteine). The residue at position 219 (cysteine 219) is a Cysteine methyl ester.

The protein belongs to the small GTPase superfamily. Rab family. In terms of assembly, interacts with RPH3A and RPH3AL. Interacts with RIMS1. Interacts with RIMS2. The GTP-bound form interacts with GAS8/DRC4 (via coiled-coil domains). Interacts with GDI2, and CHM; phosphorylation at Thr-86 disrupts these interactions. Interacts with MADD (via uDENN domain); the GTP-bound form is preferred for interaction. It depends on Mg(2+) as a cofactor. Phosphorylation of Thr-86 in the switch II region by LRRK2 prevents the association of RAB regulatory proteins, including CHM and RAB GDP dissociation inhibitor GDI2.

The protein resides in the cell membrane. The protein localises to the golgi apparatus. The catalysed reaction is GTP + H2O = GDP + phosphate + H(+). Its activity is regulated as follows. Regulated by guanine nucleotide exchange factors (GEFs) which promote the exchange of bound GDP for free GTP. Regulated by GTPase activating proteins (GAPs) which increase the GTP hydrolysis activity. Inhibited by GDP dissociation inhibitors (GDIs) which prevent Rab-GDP dissociation. The small GTPases Rab are key regulators of intracellular membrane trafficking, from the formation of transport vesicles to their fusion with membranes. Rabs cycle between an inactive GDP-bound form and an active GTP-bound form that is able to recruit to membranes different sets of downstream effectors directly responsible for vesicle formation, movement, tethering and fusion. The protein is Ras-related protein Rab-3B of Rattus norvegicus (Rat).